The following is a 120-amino-acid chain: Protein FAM241B (120 aa).

Positions 12–59 (QDDDPRVRTTTQHRSSSSQQGFFNRGHGAPPGGPGPRQQQAGARLGAA) are disordered. Composition is skewed to low complexity over residues 19–39 (RTTT…RGHG) and 47–59 (PRQQ…LGAA). S61 carries the post-translational modification Phosphoserine. A helical transmembrane segment spans residues 91 to 111 (ILLLFLLMMLGVRGLLLVGLV).

The protein belongs to the FAM241 family.

It localises to the membrane. Functionally, may play a role in lysosome homeostasis. This Mus musculus (Mouse) protein is Protein FAM241B.